Here is a 428-residue protein sequence, read N- to C-terminus: Light-independent protochlorophyllide reductase subunit N (428 aa).

[4Fe-4S] cluster contacts are provided by C31, C56, and C117.

This sequence belongs to the BchN/ChlN family. Protochlorophyllide reductase is composed of three subunits; BchL, BchN and BchB. Forms a heterotetramer of two BchB and two BchN subunits. Requires [4Fe-4S] cluster as cofactor.

It catalyses the reaction chlorophyllide a + oxidized 2[4Fe-4S]-[ferredoxin] + 2 ADP + 2 phosphate = protochlorophyllide a + reduced 2[4Fe-4S]-[ferredoxin] + 2 ATP + 2 H2O. It functions in the pathway porphyrin-containing compound metabolism; bacteriochlorophyll biosynthesis (light-independent). Functionally, component of the dark-operative protochlorophyllide reductase (DPOR) that uses Mg-ATP and reduced ferredoxin to reduce ring D of protochlorophyllide (Pchlide) to form chlorophyllide a (Chlide). This reaction is light-independent. The NB-protein (BchN-BchB) is the catalytic component of the complex. The sequence is that of Light-independent protochlorophyllide reductase subunit N from Rhodopseudomonas palustris (strain BisB5).